A 453-amino-acid chain; its full sequence is Bifunctional protein GlmU (453 aa).

A pyrophosphorylase region spans residues 1–226; it reads MKFSAVILAA…PIEVEGVNDR (226 aa). UDP-N-acetyl-alpha-D-glucosamine is bound by residues 8–11, K22, Q73, 78–79, 100–102, G137, E151, N166, and N224; these read LAAG, GT, and YGD. Mg(2+) is bound at residue D102. N224 is a binding site for Mg(2+). Residues 227-247 form a linker region; it reads AQLARLERAFQAAQAKKLLEQ. The tract at residues 248-453 is N-acetyltransferase; sequence GVMLRDPARF…TGWQRPVKKK (206 aa). Residues R330 and K348 each coordinate UDP-N-acetyl-alpha-D-glucosamine. H360 (proton acceptor) is an active-site residue. 2 residues coordinate UDP-N-acetyl-alpha-D-glucosamine: Y363 and N374. Acetyl-CoA is bound by residues A377, 383–384, S402, A420, and R437; that span reads NY.

In the N-terminal section; belongs to the N-acetylglucosamine-1-phosphate uridyltransferase family. It in the C-terminal section; belongs to the transferase hexapeptide repeat family. As to quaternary structure, homotrimer. Mg(2+) is required as a cofactor.

It localises to the cytoplasm. The catalysed reaction is alpha-D-glucosamine 1-phosphate + acetyl-CoA = N-acetyl-alpha-D-glucosamine 1-phosphate + CoA + H(+). The enzyme catalyses N-acetyl-alpha-D-glucosamine 1-phosphate + UTP + H(+) = UDP-N-acetyl-alpha-D-glucosamine + diphosphate. It participates in nucleotide-sugar biosynthesis; UDP-N-acetyl-alpha-D-glucosamine biosynthesis; N-acetyl-alpha-D-glucosamine 1-phosphate from alpha-D-glucosamine 6-phosphate (route II): step 2/2. The protein operates within nucleotide-sugar biosynthesis; UDP-N-acetyl-alpha-D-glucosamine biosynthesis; UDP-N-acetyl-alpha-D-glucosamine from N-acetyl-alpha-D-glucosamine 1-phosphate: step 1/1. It functions in the pathway bacterial outer membrane biogenesis; LPS lipid A biosynthesis. Its function is as follows. Catalyzes the last two sequential reactions in the de novo biosynthetic pathway for UDP-N-acetylglucosamine (UDP-GlcNAc). The C-terminal domain catalyzes the transfer of acetyl group from acetyl coenzyme A to glucosamine-1-phosphate (GlcN-1-P) to produce N-acetylglucosamine-1-phosphate (GlcNAc-1-P), which is converted into UDP-GlcNAc by the transfer of uridine 5-monophosphate (from uridine 5-triphosphate), a reaction catalyzed by the N-terminal domain. The polypeptide is Bifunctional protein GlmU (Vibrio vulnificus (strain CMCP6)).